We begin with the raw amino-acid sequence, 244 residues long: Heat shock transcription factor (244 aa).

A DNA-binding region spans residues 13–108 (IPKFIMKLYK…LLGFDDSLRM (96 aa)). The involved in trimerization stretch occupies residues 123-168 (DGSLKEIVEYLYVQNQELYTELSVCKERIERQERALNGLIEILSRV). Residues 204 to 244 (EGCEPASPPLQDKGIPELSFKPGGIPHADSDTKDDNYDPFF) are disordered. Basic and acidic residues predominate over residues 231-244 (ADSDTKDDNYDPFF).

Belongs to the HSF family. As to quaternary structure, homotrimer. Homotrimerization increases the affinity of HSF1 to DNA.

The protein resides in the nucleus. Its function is as follows. DNA-binding transcription factor that specifically binds heat shock promoter elements (HSE) and activates transcription. The protein is Heat shock transcription factor of Encephalitozoon cuniculi (strain GB-M1) (Microsporidian parasite).